Consider the following 388-residue polypeptide: Chorismate synthase (388 aa).

NADP(+)-binding residues include Arg39 and Arg45. FMN contacts are provided by residues 130 to 132 (RSS), 251 to 252 (NA), Gly296, 311 to 315 (KPIPT), and Arg337.

It belongs to the chorismate synthase family. Homotetramer. The cofactor is FMNH2.

The catalysed reaction is 5-O-(1-carboxyvinyl)-3-phosphoshikimate = chorismate + phosphate. It functions in the pathway metabolic intermediate biosynthesis; chorismate biosynthesis; chorismate from D-erythrose 4-phosphate and phosphoenolpyruvate: step 7/7. Functionally, catalyzes the anti-1,4-elimination of the C-3 phosphate and the C-6 proR hydrogen from 5-enolpyruvylshikimate-3-phosphate (EPSP) to yield chorismate, which is the branch point compound that serves as the starting substrate for the three terminal pathways of aromatic amino acid biosynthesis. This reaction introduces a second double bond into the aromatic ring system. This chain is Chorismate synthase, found in Streptococcus mutans serotype c (strain ATCC 700610 / UA159).